Reading from the N-terminus, the 377-residue chain is Nitric oxide reductase FlRd-NAD(+) reductase (377 aa).

The protein belongs to the FAD-dependent oxidoreductase family. It depends on FAD as a cofactor.

Its subcellular location is the cytoplasm. It catalyses the reaction 2 reduced [nitric oxide reductase rubredoxin domain] + NAD(+) + H(+) = 2 oxidized [nitric oxide reductase rubredoxin domain] + NADH. It functions in the pathway nitrogen metabolism; nitric oxide reduction. Functionally, one of at least two accessory proteins for anaerobic nitric oxide (NO) reductase. Reduces the rubredoxin moiety of NO reductase. This Salmonella paratyphi C (strain RKS4594) protein is Nitric oxide reductase FlRd-NAD(+) reductase.